A 162-amino-acid polypeptide reads, in one-letter code: MIOREX complex component 11 (162 aa).

A mitochondrion-targeting transit peptide spans 1-45 (MLPPTIRISGLAKTLHIPSRSPLQALKGSFILLNKRKFHYSPFIL). Over 46 to 84 (QEKVQSSNHTIRSDTKLWKRLLKITGKQAHQFKDKPFSH) the chain is Mitochondrial matrix. A helical membrane pass occupies residues 85–105 (IFAFLFLHELSAILPLPIFFF). Topologically, residues 106–124 (IFHSLDWTPTGLPGEYLQK) are mitochondrial intermembrane. A helical membrane pass occupies residues 125 to 142 (GSHVAASIFAKLGYNLPL). The Mitochondrial matrix portion of the chain corresponds to 143 to 162 (EKVSKTLLDGAAAYAVVKVC).

The protein belongs to the MRX11 family. In terms of assembly, associates with the mitochondrial ribosome.

The protein localises to the mitochondrion. The protein resides in the mitochondrion inner membrane. Component of MIOREX complexes, large expressome-like assemblies of ribosomes with factors involved in all the steps of post-transcriptional gene expression. The protein is MIOREX complex component 11 (mrx11) of Schizosaccharomyces pombe (strain 972 / ATCC 24843) (Fission yeast).